A 369-amino-acid polypeptide reads, in one-letter code: Peptide chain release factor 2 (369 aa).

Glutamine 247 is subject to N5-methylglutamine.

It belongs to the prokaryotic/mitochondrial release factor family. Post-translationally, methylated by PrmC. Methylation increases the termination efficiency of RF2.

The protein localises to the cytoplasm. Peptide chain release factor 2 directs the termination of translation in response to the peptide chain termination codons UGA and UAA. The sequence is that of Peptide chain release factor 2 from Phenylobacterium zucineum (strain HLK1).